A 287-amino-acid polypeptide reads, in one-letter code: Ventral anterior homeobox 1b (287 aa).

The segment covering 1-33 (MFEKTRDMDVRCNIEENGRISKPKDNKEIRESQ) has biased composition (basic and acidic residues). Residues 1-55 (MFEKTRDMDVRCNIEENGRISKPKDNKEIRESQSKMPSTYPAPGSSEGCAKNKSS) form a disordered region. A DNA-binding region (homeobox) is located at residues 89–148 (PKRTRTSFTAEQLYRLEMEFQRCQYVVGRERTELARQLNLSETQVKVWFQNRRTKQKKDQ).

This sequence belongs to the EMX homeobox family.

It is found in the nucleus. Its function is as follows. Involved in ventral eye development. This is Ventral anterior homeobox 1b (vax1-b) from Xenopus laevis (African clawed frog).